A 483-amino-acid chain; its full sequence is Glutamate--tRNA ligase (483 aa).

The 'HIGH' region motif lies at 11–21 (PSPTGHLHIGN). Residues 252–256 (KLSKR) carry the 'KMSKS' region motif. Residue lysine 255 participates in ATP binding.

It belongs to the class-I aminoacyl-tRNA synthetase family. Glutamate--tRNA ligase type 1 subfamily. As to quaternary structure, monomer.

The protein resides in the cytoplasm. It carries out the reaction tRNA(Glu) + L-glutamate + ATP = L-glutamyl-tRNA(Glu) + AMP + diphosphate. Functionally, catalyzes the attachment of glutamate to tRNA(Glu) in a two-step reaction: glutamate is first activated by ATP to form Glu-AMP and then transferred to the acceptor end of tRNA(Glu). In Bacillus velezensis (strain DSM 23117 / BGSC 10A6 / LMG 26770 / FZB42) (Bacillus amyloliquefaciens subsp. plantarum), this protein is Glutamate--tRNA ligase.